Consider the following 245-residue polypeptide: 1-(5-phosphoribosyl)-5-[(5-phosphoribosylamino)methylideneamino] imidazole-4-carboxamide isomerase (245 aa).

Asp7 (proton acceptor) is an active-site residue. The active-site Proton donor is the Asp129.

It belongs to the HisA/HisF family.

The protein localises to the cytoplasm. The catalysed reaction is 1-(5-phospho-beta-D-ribosyl)-5-[(5-phospho-beta-D-ribosylamino)methylideneamino]imidazole-4-carboxamide = 5-[(5-phospho-1-deoxy-D-ribulos-1-ylimino)methylamino]-1-(5-phospho-beta-D-ribosyl)imidazole-4-carboxamide. It functions in the pathway amino-acid biosynthesis; L-histidine biosynthesis; L-histidine from 5-phospho-alpha-D-ribose 1-diphosphate: step 4/9. The protein is 1-(5-phosphoribosyl)-5-[(5-phosphoribosylamino)methylideneamino] imidazole-4-carboxamide isomerase of Salmonella choleraesuis (strain SC-B67).